We begin with the raw amino-acid sequence, 360 residues long: Phospho-N-acetylmuramoyl-pentapeptide-transferase (360 aa).

Helical transmembrane passes span 21–41 (YITV…LWIG), 73–93 (TMGG…WANL), 94–114 (ANPY…IGFV), 132–152 (WKYF…YWLG), 168–188 (IMPQ…VGTG), 199–219 (GLAI…AWAT), 239–259 (VVVF…FNTY), 263–283 (VFMG…VAIL), 288–308 (FLLV…ILQV), and 338–358 (VIIR…VTLK).

Belongs to the glycosyltransferase 4 family. MraY subfamily. Requires Mg(2+) as cofactor.

The protein resides in the cell inner membrane. It carries out the reaction UDP-N-acetyl-alpha-D-muramoyl-L-alanyl-gamma-D-glutamyl-meso-2,6-diaminopimeloyl-D-alanyl-D-alanine + di-trans,octa-cis-undecaprenyl phosphate = di-trans,octa-cis-undecaprenyl diphospho-N-acetyl-alpha-D-muramoyl-L-alanyl-D-glutamyl-meso-2,6-diaminopimeloyl-D-alanyl-D-alanine + UMP. Its pathway is cell wall biogenesis; peptidoglycan biosynthesis. Functionally, catalyzes the initial step of the lipid cycle reactions in the biosynthesis of the cell wall peptidoglycan: transfers peptidoglycan precursor phospho-MurNAc-pentapeptide from UDP-MurNAc-pentapeptide onto the lipid carrier undecaprenyl phosphate, yielding undecaprenyl-pyrophosphoryl-MurNAc-pentapeptide, known as lipid I. This chain is Phospho-N-acetylmuramoyl-pentapeptide-transferase, found in Haemophilus influenzae (strain PittEE).